Consider the following 140-residue polypeptide: MATRGLLLASWALLGALVLQAEARPAPYGVKLCGREFIRAVIFTCGGSRWRRADILAHDPLGEFFADGEANTDHLASELDEAVGSSEWLALTKSPQVFYGGRSSWQGSPGVVRGSRDVLAGLSSSCCEWGCSKSQISSLC.

Residues 1-23 (MATRGLLLASWALLGALVLQAEA) form the signal peptide. Intrachain disulfides connect Cys33–Cys127, Cys45–Cys140, and Cys126–Cys131. The propeptide at 53–116 (ADILAHDPLG…GSPGVVRGSR (64 aa)) is connecting peptide.

Belongs to the insulin family. As to quaternary structure, heterodimer of a B chain and an A chain linked by two disulfide bonds. In terms of tissue distribution, highly abundant expression is detected in neurons within the ventomedial dorsal tegmental nucleus and the laterally central gray alpha of the pons. Also detected at much lower levels within the hippocampus.

The protein resides in the secreted. Functionally, may play a role in neuropeptide signaling processes. Ligand for LGR7, relaxin-3 receptor-1 and relaxin-3 receptor-2. In Rattus norvegicus (Rat), this protein is Relaxin-3 (Rln3).